We begin with the raw amino-acid sequence, 649 residues long: Microtubule-associated protein VP6 (649 aa).

It localises to the virion. It is found in the host cytoplasm. Its subcellular location is the host cytoskeleton. Functionally, minor inner capsid component. Displays NTPase and RNA 5'-triphosphatase (RTPase) activities. May function as a cofactor of polymerase VP2. Associates with microtubules and plays a role in the formation, structural organization and morphology of viral inclusions, where the assembly of cores and the replication of viral RNA occur. The chain is Microtubule-associated protein VP6 (S6) from Cryphonectria parasitica (Chestnut blight fungus).